The sequence spans 619 residues: uncharacterized protein (619 aa).

An N-terminal signal peptide occupies residues methionine 1 to threonine 21.

This is an uncharacterized protein from Archaeoglobus fulgidus (strain ATCC 49558 / DSM 4304 / JCM 9628 / NBRC 100126 / VC-16).